The following is a 139-amino-acid chain: Endoribonuclease YbeY (139 aa).

Histidine 99, histidine 103, and histidine 109 together coordinate Zn(2+).

Belongs to the endoribonuclease YbeY family. It depends on Zn(2+) as a cofactor.

The protein localises to the cytoplasm. Single strand-specific metallo-endoribonuclease involved in late-stage 70S ribosome quality control and in maturation of the 3' terminus of the 16S rRNA. In Nautilia profundicola (strain ATCC BAA-1463 / DSM 18972 / AmH), this protein is Endoribonuclease YbeY.